The following is a 566-amino-acid chain: Proline--tRNA ligase (566 aa).

Belongs to the class-II aminoacyl-tRNA synthetase family. ProS type 1 subfamily. As to quaternary structure, homodimer.

It is found in the cytoplasm. It catalyses the reaction tRNA(Pro) + L-proline + ATP = L-prolyl-tRNA(Pro) + AMP + diphosphate. Its function is as follows. Catalyzes the attachment of proline to tRNA(Pro) in a two-step reaction: proline is first activated by ATP to form Pro-AMP and then transferred to the acceptor end of tRNA(Pro). As ProRS can inadvertently accommodate and process non-cognate amino acids such as alanine and cysteine, to avoid such errors it has two additional distinct editing activities against alanine. One activity is designated as 'pretransfer' editing and involves the tRNA(Pro)-independent hydrolysis of activated Ala-AMP. The other activity is designated 'posttransfer' editing and involves deacylation of mischarged Ala-tRNA(Pro). The misacylated Cys-tRNA(Pro) is not edited by ProRS. The chain is Proline--tRNA ligase from Bacillus anthracis (strain A0248).